The sequence spans 336 residues: Dihydroorotate dehydrogenase (quinone) (336 aa).

Residues 62–66 (AGLDK) and threonine 86 contribute to the FMN site. Lysine 66 lines the substrate pocket. 111–115 (NRMGF) lines the substrate pocket. FMN-binding residues include asparagine 139 and asparagine 172. Residue asparagine 172 participates in substrate binding. The Nucleophile role is filled by serine 175. Asparagine 177 lines the substrate pocket. FMN is bound by residues lysine 217 and threonine 245. 246–247 (NT) serves as a coordination point for substrate. FMN contacts are provided by residues glycine 268, glycine 297, and 318-319 (YS).

The protein belongs to the dihydroorotate dehydrogenase family. Type 2 subfamily. As to quaternary structure, monomer. FMN serves as cofactor.

It localises to the cell membrane. The enzyme catalyses (S)-dihydroorotate + a quinone = orotate + a quinol. It functions in the pathway pyrimidine metabolism; UMP biosynthesis via de novo pathway; orotate from (S)-dihydroorotate (quinone route): step 1/1. Its function is as follows. Catalyzes the conversion of dihydroorotate to orotate with quinone as electron acceptor. This Shigella flexneri serotype 5b (strain 8401) protein is Dihydroorotate dehydrogenase (quinone).